Reading from the N-terminus, the 457-residue chain is Glutamate--tRNA ligase 1 (457 aa).

The 'HIGH' region motif lies at Pro9 to Asn19. The 'KMSKS' region motif lies at Gly250 to Arg254. Lys253 serves as a coordination point for ATP.

It belongs to the class-I aminoacyl-tRNA synthetase family. Glutamate--tRNA ligase type 1 subfamily. As to quaternary structure, monomer.

The protein localises to the cytoplasm. It catalyses the reaction tRNA(Glu) + L-glutamate + ATP = L-glutamyl-tRNA(Glu) + AMP + diphosphate. In terms of biological role, catalyzes the attachment of glutamate to tRNA(Glu) in a two-step reaction: glutamate is first activated by ATP to form Glu-AMP and then transferred to the acceptor end of tRNA(Glu). This chain is Glutamate--tRNA ligase 1, found in Brucella abortus (strain S19).